We begin with the raw amino-acid sequence, 321 residues long: Ubiquitin carboxyl-terminal hydrolase ubh-4 (321 aa).

A UCH catalytic domain is found at 6–220 (SWCLIESDPG…ITFNLMALVP (215 aa)). Residue Cys-83 is the Nucleophile of the active site. His-158 acts as the Proton donor in catalysis. Residues 273–301 (NYTPFVIELMKILAKEGKLVGLVDNAYQA) form the ULD domain.

It belongs to the peptidase C12 family. As to quaternary structure, interacts with proteasome 19S subunit rpn-13. As to expression, highly expressed in intestine and to a lesser extent in other tissues including muscles and neurons.

It catalyses the reaction Thiol-dependent hydrolysis of ester, thioester, amide, peptide and isopeptide bonds formed by the C-terminal Gly of ubiquitin (a 76-residue protein attached to proteins as an intracellular targeting signal).. Functionally, ubiquitin-protein hydrolase involved both in the processing of ubiquitin precursors and of ubiquitinated proteins. This enzyme is a thiol protease that recognizes and hydrolyzes a peptide bond at the C-terminal glycine of ubiquitin. The chain is Ubiquitin carboxyl-terminal hydrolase ubh-4 from Caenorhabditis elegans.